Consider the following 166-residue polypeptide: Monothiol glutaredoxin-3 (166 aa).

Residues 56 to 159 (DSTDFEVFLE…STLDEWTHNK (104 aa)) enclose the Glutaredoxin domain. Cys-76 lines the [2Fe-2S] cluster pocket.

It belongs to the glutaredoxin family. Monothiol subfamily. As to quaternary structure, homodimer.

Its subcellular location is the nucleus. Functionally, monothiol glutaredoxin involved in the biogenesis of iron-sulfur clusters. Binds one iron-sulfur cluster per dimer. The iron-sulfur cluster is bound between subunits, and is complexed by a bound glutathione and a cysteine residue from each subunit. The polypeptide is Monothiol glutaredoxin-3 (grx3) (Schizosaccharomyces pombe (strain 972 / ATCC 24843) (Fission yeast)).